Reading from the N-terminus, the 612-residue chain is Alpha-glycerophosphate oxidase (612 aa).

21–49 (DLLIIGGGITGAGVALQAAASGLDTGLIE) lines the FAD pocket. The span at 399 to 408 (ETSTSEKELD) shows a compositional bias: basic and acidic residues. Residues 399–418 (ETSTSEKELDPSAVSRGSSF) are disordered.

Belongs to the FAD-dependent glycerol-3-phosphate dehydrogenase family. Requires FAD as cofactor.

It localises to the cytoplasm. The catalysed reaction is sn-glycerol 3-phosphate + O2 = dihydroxyacetone phosphate + H2O2. The protein is Alpha-glycerophosphate oxidase (glpO) of Streptococcus pyogenes serotype M6 (strain ATCC BAA-946 / MGAS10394).